A 67-amino-acid chain; its full sequence is Amphipathic peptide Tx348 (67 aa).

The signal sequence occupies residues Met-1 to Ala-23. At Phe-33 the chain carries Phenylalanine amide. A propeptide spanning residues Ser-37–Tyr-67 is cleaved from the precursor.

The protein belongs to the non-disulfide-bridged peptide (NDBP) superfamily. Short antimicrobial peptide (group 4) family. In terms of tissue distribution, expressed by the venom gland.

It localises to the secreted. The protein localises to the target cell membrane. In terms of biological role, amphipathic peptide that has antibacterial activities. The chain is Amphipathic peptide Tx348 from Buthus israelis (Israeli scorpion).